A 317-amino-acid polypeptide reads, in one-letter code: Methionyl-tRNA formyltransferase (317 aa).

112-115 contacts (6S)-5,6,7,8-tetrahydrofolate; sequence SLLP.

Belongs to the Fmt family.

The catalysed reaction is L-methionyl-tRNA(fMet) + (6R)-10-formyltetrahydrofolate = N-formyl-L-methionyl-tRNA(fMet) + (6S)-5,6,7,8-tetrahydrofolate + H(+). Attaches a formyl group to the free amino group of methionyl-tRNA(fMet). The formyl group appears to play a dual role in the initiator identity of N-formylmethionyl-tRNA by promoting its recognition by IF2 and preventing the misappropriation of this tRNA by the elongation apparatus. The protein is Methionyl-tRNA formyltransferase of Histophilus somni (strain 129Pt) (Haemophilus somnus).